Reading from the N-terminus, the 101-residue chain is Protein translation factor SUI1 homolog (101 aa).

This sequence belongs to the SUI1 family.

This chain is Protein translation factor SUI1 homolog, found in Methanoregula boonei (strain DSM 21154 / JCM 14090 / 6A8).